We begin with the raw amino-acid sequence, 343 residues long: Transmembrane protein 120A (343 aa).

At 1–135 (MQSPPPDPLG…KFAYKDEYEK (135 aa)) the chain is on the cytoplasmic side. A CoA-binding site is contributed by Lys130. The helical transmembrane segment at 136–156 (FKLYLTIILIVISFTCRFLLN) threads the bilayer. The Extracellular portion of the chain corresponds to 157–162 (SRVTDA). A helical transmembrane segment spans residues 163-183 (AFNFLLVWYYCTLTIRESILI). The Cytoplasmic portion of the chain corresponds to 184-190 (NNGSRIK). CoA contacts are provided by Ser187 and Arg188. Residues 191-211 (GWWVFHHYVSTFLSGVMLTWP) traverse the membrane as a helical segment. Residues 212 to 222 (DGLMYQKFRNQ) are Extracellular-facing. Residues 223–240 (FLSFSMYQSFVQFLQYYY) traverse the membrane as a helical segment. CoA is bound by residues Gln237, Tyr240, Gln241, and His283. Residues 241-273 (QSGCLYRLRALGERHTMDLTVEGFQSWMWRGLT) are Cytoplasmic-facing. A helical membrane pass occupies residues 274-294 (FLLPFLFFGHFWQLFNALTLF). The Extracellular segment spans residues 295–305 (NLARDPECKEW). Residues 306 to 326 (QVLMCGFPFLLLFLGNFFTTL) traverse the membrane as a helical segment. Over 327–343 (RVVHQKFHSQQHGNKKD) the chain is Cytoplasmic. CoA is bound at residue Lys332.

Belongs to the TMEM120 family. As to quaternary structure, homodimer. Forms heterooligomer with TMEM120B. Interacts with PKD2; TMEM120A inhibits PKD2 channel activity through the physical association of PKD2 with TMEM120A. In terms of tissue distribution, widely expressed, with higher expression in the heart, kidneys, colon and sensory neurons of the dorsal root ganglia. Expressed in nociceptors. Highly expressed in white adipose tissue (at protein level). Highly expressed in brown adipose tissue and expressed at low levels in liver.

The protein localises to the cell membrane. The protein resides in the nucleus envelope. It is found in the nucleus inner membrane. Its subcellular location is the endoplasmic reticulum. Functionally, multifunctional protein involved in mechanosensation, and plays an essential role in lipid metabolism and adipocyte differentiation. May function as a potential ion channel involved in sensing mechanical stimuli. Mediates the mechanosensitivity of the PKD2-TMEM120A channel complex through direct physical interaction. TMEM120A seems to affect mechanosensation by inhibiting PIEZO2 channels, possibly by altering cellular lipid content. TMEM120A is structurally similar to a lipid-modifying enzyme, ELOVL7, and contains a bound coenzyme A molecule, which suggests it might function as an enzyme in lipid metabolism. The sequence is that of Transmembrane protein 120A from Mus musculus (Mouse).